A 545-amino-acid chain; its full sequence is Membrane protein insertase YidC (545 aa).

A helical transmembrane segment spans residues 6 to 26 (LILFSALVLVLFLMWDAWQTD). The disordered stretch occupies residues 34 to 59 (PPPPQPTASSGESSPVLPEAVPDAPP). A run of 3 helical transmembrane segments spans residues 357 to 377 (LVGN…LVFF), 428 to 448 (GGCL…WMLL), and 505 to 525 (PVMF…YWVV).

The protein belongs to the OXA1/ALB3/YidC family. Type 1 subfamily. Interacts with the Sec translocase complex via SecD. Specifically interacts with transmembrane segments of nascent integral membrane proteins during membrane integration.

It localises to the cell inner membrane. Required for the insertion and/or proper folding and/or complex formation of integral membrane proteins into the membrane. Involved in integration of membrane proteins that insert both dependently and independently of the Sec translocase complex, as well as at least some lipoproteins. Aids folding of multispanning membrane proteins. The sequence is that of Membrane protein insertase YidC from Nitrosococcus oceani (strain ATCC 19707 / BCRC 17464 / JCM 30415 / NCIMB 11848 / C-107).